A 224-amino-acid polypeptide reads, in one-letter code: Ribonuclease 3 (224 aa).

The RNase III domain maps to 5–127 (LERLCRRLNY…ILAAIYLDGG (123 aa)). E40 contacts Mg(2+). The active site involves D44. D113 and E116 together coordinate Mg(2+). The active site involves E116. Residues 154–224 (DAKTQLQEFL…AKAMLEQLQG (71 aa)) enclose the DRBM domain.

It belongs to the ribonuclease III family. Homodimer. Requires Mg(2+) as cofactor.

The protein resides in the cytoplasm. It carries out the reaction Endonucleolytic cleavage to 5'-phosphomonoester.. Digests double-stranded RNA. Involved in the processing of primary rRNA transcript to yield the immediate precursors to the large and small rRNAs (23S and 16S). Processes some mRNAs, and tRNAs when they are encoded in the rRNA operon. Processes pre-crRNA and tracrRNA of type II CRISPR loci if present in the organism. This Legionella pneumophila (strain Paris) protein is Ribonuclease 3.